Reading from the N-terminus, the 134-residue chain is Protein NrdI (134 aa).

This sequence belongs to the NrdI family.

Functionally, probably involved in ribonucleotide reductase function. In Rhizobium leguminosarum bv. trifolii (strain WSM2304), this protein is Protein NrdI.